The chain runs to 382 residues: N-acetylglucosamine-6-phosphate deacetylase (382 aa).

A divalent metal cation is bound at residue glutamate 131. 142-143 (TH) is a substrate binding site. A divalent metal cation-binding residues include histidine 195 and histidine 216. Substrate-binding positions include 219–220 (NA), arginine 227, and 248–251 (DGLH). Residue aspartate 273 is the Proton donor/acceptor of the active site. 306–308 (LSG) contacts substrate.

Belongs to the metallo-dependent hydrolases superfamily. NagA family. Homotetramer. A divalent metal cation is required as a cofactor.

The enzyme catalyses N-acetyl-D-glucosamine 6-phosphate + H2O = D-glucosamine 6-phosphate + acetate. Its pathway is amino-sugar metabolism; N-acetylneuraminate degradation; D-fructose 6-phosphate from N-acetylneuraminate: step 4/5. Functionally, involved in the first committed step in the biosynthesis of amino-sugar-nucleotides. Catalyzes the hydrolysis of the N-acetyl group of N-acetylglucosamine-6-phosphate (GlcNAc-6-P) to yield glucosamine 6-phosphate and acetate. Can probably also catalyze the deacetylation of N-acetyl-D-galactosamine 6-phosphate to D-galactosamine 6-phosphate. The sequence is that of N-acetylglucosamine-6-phosphate deacetylase (nagA) from Escherichia coli O157:H7.